Consider the following 466-residue polypeptide: Amino acid permease 4 (466 aa).

Topologically, residues 1-22 (MDVPRPAFKCFDDDGRLKRSGT) are cytoplasmic. A run of 2 helical transmembrane segments spans residues 23–43 (VWTA…LSLA) and 44–64 (WAIG…FSFV). The Cytoplasmic portion of the chain corresponds to 65–111 (TYYSSTLLSDCYRTGDPVSGKRNYTYMDAVRSILGGFRFKICGLIQY). Residues 112 to 132 (LNLFGITVGYTIAASISMMAI) traverse the membrane as a helical segment. The Extracellular segment spans residues 133–177 (KRSNCFHESGGKNPCHMSSNPYMIMFGVTEILLSQIKDFDQIWWL). A helical transmembrane segment spans residues 178 to 198 (SIVAAIMSFTYSAIGLALGII). The Cytoplasmic segment spans residues 199 to 226 (QVAANGVVKGSLTGISIGAVTQTQKIWR). A helical transmembrane segment spans residues 227–247 (TFQALGDIAFAYSYSVVLIEI). Topologically, residues 248–266 (QDTVRSPPAESKTMKIATR) are extracellular. The chain crosses the membrane as a helical span at residues 267-287 (ISIAVTTTFYMLCGCMGYAAF). Residues 288 to 290 (GDK) are Cytoplasmic-facing. A helical membrane pass occupies residues 291-311 (APGNLLTGFGFYNPFWLLDVA). The Extracellular segment spans residues 312–313 (NA). Residues 314-334 (AIVIHLVGAYQVFAQPIFAFI) form a helical membrane-spanning segment. Topologically, residues 335 to 369 (EKQAAARFPDSDLVTKEYEIRIPGFRSPYKVNVFR) are cytoplasmic. Residues 370-390 (AVYRSGFVVLTTVISMLMPFF) form a helical membrane-spanning segment. The Extracellular segment spans residues 391 to 392 (ND). A helical membrane pass occupies residues 393–413 (VVGILGALGFWPLTVYFPVEM). At 414-435 (YIRQRKVERWSMKWVCLQMLSC) the chain is on the cytoplasmic side. A helical membrane pass occupies residues 436 to 456 (GCLMITLVAGVGSIAGVMLDL). The Extracellular segment spans residues 457 to 466 (KVYKPFKTTY).

It belongs to the amino acid/polyamine transporter 2 family. Amino acid/auxin permease (AAAP) (TC 2.A.18.2) subfamily. Expressed in leaves, stems and flowers.

It localises to the cell membrane. Its activity is regulated as follows. Inhibited by 2,4-dinitrophenol. Amino acid-proton symporter. Stereospecific transporter with a broad specificity for neutral amino acids, favoring small amino acids such as alanine, asparagine and glutamine. Also accepts large aromatic residues such as in phenlalanine or tyrosine. This is Amino acid permease 4 (AAP4) from Arabidopsis thaliana (Mouse-ear cress).